Reading from the N-terminus, the 475-residue chain is Ribulose bisphosphate carboxylase large chain (475 aa).

A propeptide spanning residues 1–2 (MS) is cleaved from the precursor. P3 carries the N-acetylproline modification. K14 carries the post-translational modification N6,N6,N6-trimethyllysine. Residues N123 and T173 each contribute to the substrate site. The active-site Proton acceptor is K175. A substrate-binding site is contributed by K177. K201, D203, and E204 together coordinate Mg(2+). K201 carries the N6-carboxylysine modification. H294 (proton acceptor) is an active-site residue. Substrate is bound by residues R295, H327, and S379.

This sequence belongs to the RuBisCO large chain family. Type I subfamily. In terms of assembly, heterohexadecamer of 8 large chains and 8 small chains; disulfide-linked. The disulfide link is formed within the large subunit homodimers. Mg(2+) is required as a cofactor. Post-translationally, the disulfide bond which can form in the large chain dimeric partners within the hexadecamer appears to be associated with oxidative stress and protein turnover.

Its subcellular location is the plastid. It is found in the chloroplast. It catalyses the reaction 2 (2R)-3-phosphoglycerate + 2 H(+) = D-ribulose 1,5-bisphosphate + CO2 + H2O. The enzyme catalyses D-ribulose 1,5-bisphosphate + O2 = 2-phosphoglycolate + (2R)-3-phosphoglycerate + 2 H(+). Its function is as follows. RuBisCO catalyzes two reactions: the carboxylation of D-ribulose 1,5-bisphosphate, the primary event in carbon dioxide fixation, as well as the oxidative fragmentation of the pentose substrate in the photorespiration process. Both reactions occur simultaneously and in competition at the same active site. This Cerastium glomeratum (Sticky chickweed) protein is Ribulose bisphosphate carboxylase large chain.